A 527-amino-acid chain; its full sequence is Bifunctional methyltransferase (527 aa).

The hemK stretch occupies residues 1–309 (MQYSIKQVLS…GHSRVILFSP (309 aa)). Residues 1-311 (MQYSIKQVLS…SRVILFSPIN (311 aa)) are RF MTase. S-adenosyl-L-methionine is bound by residues 149–153 (GTGSG), Asp172, Trp201, Asn216, Glu356, Glu381, Asn408, and Asp430. A substrate-binding site is contributed by 216 to 219 (NPPY). Positions 310–527 (INLNRSYARR…IILQHVSGDH (218 aa)) are tRNA (guanine-N(7)-)-methyltransferase. Residues 314–527 (RSYARRIGKS…IILQHVSGDH (214 aa)) are tRNA MTase. Residue Asp430 is part of the active site. Substrate is bound by residues Lys434 and Asp466.

The protein in the C-terminal section; belongs to the class I-like SAM-binding methyltransferase superfamily. TrmB family. It in the N-terminal section; belongs to the protein N5-glutamine methyltransferase family. PrmC subfamily.

The catalysed reaction is L-glutaminyl-[peptide chain release factor] + S-adenosyl-L-methionine = N(5)-methyl-L-glutaminyl-[peptide chain release factor] + S-adenosyl-L-homocysteine + H(+). It catalyses the reaction guanosine(46) in tRNA + S-adenosyl-L-methionine = N(7)-methylguanosine(46) in tRNA + S-adenosyl-L-homocysteine. Its function is as follows. Methylates the class 1 translation termination release factors RF1/PrfA and RF2/PrfB on the glutamine residue of the universally conserved GGQ motif. In terms of biological role, catalyzes the formation of N(7)-methylguanine at position 46 (m7G46) in tRNA. This Rickettsia felis (strain ATCC VR-1525 / URRWXCal2) (Rickettsia azadi) protein is Bifunctional methyltransferase (prmC/trmB).